Reading from the N-terminus, the 862-residue chain is Genome polyprotein (862 aa).

Glycine 2 carries N-myristoyl glycine; by host lipidation.

The protein belongs to the picornaviruses polyprotein family. As to quaternary structure, interacts with capsid protein VP1 and capsid protein VP3 to form heterotrimeric protomers. Interacts with capsid protein VP0, and capsid protein VP3 to form heterotrimeric protomers. Five protomers subsequently associate to form pentamers which serve as building blocks for the capsid. Interacts with capsid protein VP2, capsid protein VP3 and capsid protein VP4 following cleavage of capsid protein VP0. In terms of assembly, interacts with capsid protein VP1 and capsid protein VP3 in the mature capsid. As to quaternary structure, interacts with capsid protein VP0 and capsid protein VP1 to form heterotrimeric protomers. Five protomers subsequently associate to form pentamers which serve as building blocks for the capsid. Interacts with capsid protein VP4 in the mature capsid. Interacts with protein 2C; this interaction may be important for virion morphogenesis. Interacts with capsid protein VP1 and capsid protein VP3. In terms of processing, specific enzymatic cleavages in vivo by the viral proteases yield processing intermediates and the mature proteins. Post-translationally, myristoylation is required for the formation of pentamers during virus assembly. Further assembly of 12 pentamers and a molecule of genomic RNA generates the provirion. During virion maturation, immature virions are rendered infectious following cleavage of VP0 into VP4 and VP2. This maturation seems to be an autocatalytic event triggered by the presence of RNA in the capsid and it is followed by a conformational change infectious virion. In terms of processing, myristoylation is required during RNA encapsidation and formation of the mature virus particle.

It localises to the virion. It is found in the host cytoplasm. Functionally, forms an icosahedral capsid of pseudo T=3 symmetry with capsid proteins VP2 and VP3. The capsid is 300 Angstroms in diameter, composed of 60 copies of each capsid protein and enclosing the viral positive strand RNA genome. Capsid protein VP1 mainly forms the vertices of the capsid. Capsid protein VP1 interacts with host cell receptor to provide virion attachment to target host cells. This attachment induces virion internalization. Tyrosine kinases are probably involved in the entry process. After binding to its receptor, the capsid undergoes conformational changes. Capsid protein VP1 N-terminus (that contains an amphipathic alpha-helix) and capsid protein VP4 are externalized. Together, they shape a pore in the host membrane through which viral genome is translocated to host cell cytoplasm. In terms of biological role, forms an icosahedral capsid of pseudo T=3 symmetry with capsid proteins VP2 and VP3. The capsid is 300 Angstroms in diameter, composed of 60 copies of each capsid protein and enclosing the viral positive strand RNA genome. Lies on the inner surface of the capsid shell. After binding to the host receptor, the capsid undergoes conformational changes. Capsid protein VP4 is released, Capsid protein VP1 N-terminus is externalized, and together, they shape a pore in the host membrane through which the viral genome is translocated into the host cell cytoplasm. Its function is as follows. Component of immature procapsids, which is cleaved into capsid proteins VP4 and VP2 after maturation. Allows the capsid to remain inactive before the maturation step. The polypeptide is Genome polyprotein (Echovirus 16 (strain Harrington)).